The sequence spans 458 residues: MSTGKIIQVIGAVIDVEFARDNTPKVYDALNVVEAGLVLEVQQQIGDGVVRTIAMGSSDGLRRGMEVKNTNAPISVPVGHGTLGRIMNVLGEPIDEAGPIEYTEKRSIHQAPPAYDELALSTEILETGIKVVDLICPFAKGGKVGLFGGAGVGKTVTMMELINNIAKEHSGYSVFSGVGERTREGNDFYYEMKYSNVLDKVSLVYGQMNEPPGNRLRVALSGLTIAEGFRDEKRDVLMFIDNIYRYTLAGTEVSALLGRMPSAVGYQPTLAAEMGALQERITSTKTGSITSVQAVYVPADDLTDPSPATTFSHLDATIVLSRQIAELGIYPAVDPLDSTSRQLDPLVVGQDHYETARAVQKVLQRYKELKDIIAILGMDELSDEDKKIVDRARKIQRFLSQPFHVAEVFTGNPGKFVSLKDTVASFKAIVNGEYDHLPEQAFYMVGSIQEAIEKAKTL.

An ATP-binding site is contributed by 148-155 (GGAGVGKT).

It belongs to the ATPase alpha/beta chains family. F-type ATPases have 2 components, CF(1) - the catalytic core - and CF(0) - the membrane proton channel. CF(1) has five subunits: alpha(3), beta(3), gamma(1), delta(1), epsilon(1). CF(0) has three main subunits: a(1), b(2) and c(9-12). The alpha and beta chains form an alternating ring which encloses part of the gamma chain. CF(1) is attached to CF(0) by a central stalk formed by the gamma and epsilon chains, while a peripheral stalk is formed by the delta and b chains.

The protein resides in the cell inner membrane. It catalyses the reaction ATP + H2O + 4 H(+)(in) = ADP + phosphate + 5 H(+)(out). Its function is as follows. Produces ATP from ADP in the presence of a proton gradient across the membrane. The catalytic sites are hosted primarily by the beta subunits. This is ATP synthase subunit beta from Francisella tularensis subsp. holarctica (strain FTNF002-00 / FTA).